The primary structure comprises 190 residues: MARLCAFLMILIVMSYWSTCSLGCDLPHTYNLRNKRALKVLAQMRRLTPLSCLKDRKDFGFPLEKVDAQQIQKAQSIPVLRDLTQQILNLFASKDSSAAWNATLLDSFCNDLHQQLNDLQGCLMQQVGVQESPLTQEDSLLAVRIYFHRITVFLREKKHSPCAWEVVRAEVWRALSSSANVLGRLREEKA.

The N-terminal stretch at 1 to 23 (MARLCAFLMILIVMSYWSTCSLG) is a signal peptide. 2 cysteine pairs are disulfide-bonded: C24–C122 and C52–C162. N-linked (GlcNAc...) asparagine glycosylation occurs at N101.

This sequence belongs to the alpha/beta interferon family. N-glycosylated.

The protein resides in the secreted. Has antiviral and antiproliferative activities. Produced by macrophages and stimulates the production of two enzymes: a protein kinase and an oligoadenylate synthetase. During viral infection, mediates antiviral effect, either directly by inducing interferon-stimulated genes, either indirectly through stimulation of natural killer cells enabling them to control viral replication. The protein is Interferon alpha-11 (Ifna11) of Mus musculus (Mouse).